Reading from the N-terminus, the 140-residue chain is MEIILKIGILGFGAVFGYLFGEVDLLVKVLVCFIVADYISGLLASGYLGELSSKMGFKGIAKKIAILILVAIAHQIDLILGTHNTTRDAVIFFYLANELISILENFVRMGMKVPEVLKNLILIFDAKSGDEEEKHDKDMD.

Transmembrane regions (helical) follow at residues 4-21 (ILKI…YLFG) and 26-48 (LVKV…SGYL).

Belongs to the bacteriophage holin family. Cp-1 holin subfamily.

It localises to the cell membrane. This is an uncharacterized protein from Listeria innocua serovar 6a (strain ATCC BAA-680 / CLIP 11262).